The chain runs to 209 residues: Urease accessory protein UreG (209 aa).

A GTP-binding site is contributed by 11–18 (GPVGSGKT).

Belongs to the SIMIBI class G3E GTPase family. UreG subfamily. As to quaternary structure, homodimer. UreD, UreF and UreG form a complex that acts as a GTP-hydrolysis-dependent molecular chaperone, activating the urease apoprotein by helping to assemble the nickel containing metallocenter of UreC. The UreE protein probably delivers the nickel.

It localises to the cytoplasm. In terms of biological role, facilitates the functional incorporation of the urease nickel metallocenter. This process requires GTP hydrolysis, probably effectuated by UreG. This is Urease accessory protein UreG from Edwardsiella ictaluri (strain 93-146).